A 150-amino-acid chain; its full sequence is Peptide deformylase (150 aa).

Residues Cys-88 and His-130 each contribute to the Fe cation site. Glu-131 is an active-site residue. His-134 lines the Fe cation pocket.

It belongs to the polypeptide deformylase family. It depends on Fe(2+) as a cofactor.

It catalyses the reaction N-terminal N-formyl-L-methionyl-[peptide] + H2O = N-terminal L-methionyl-[peptide] + formate. Removes the formyl group from the N-terminal Met of newly synthesized proteins. Requires at least a dipeptide for an efficient rate of reaction. N-terminal L-methionine is a prerequisite for activity but the enzyme has broad specificity at other positions. This chain is Peptide deformylase, found in Desulfitobacterium hafniense (strain DSM 10664 / DCB-2).